The chain runs to 1214 residues: MKQPIMADGPRCKRRKQANPRRKNVVNYDNVVDTGSETDEEDKLHIAEDDGIANPLDQETSPASVPNHESSPHVSQALLPREEEEDEIREGGVEHPWHNNEILQASVDGPEEMKEDYDTMGPEATIQTAINNGTVKNANCTSDFEEYFAKRKLEERDGHAVSIEEYLQRSDTAIIYPEAPEELSRLGTPEANGQEENDLPPGTPDAFAQLLTCPYCDRGYKRLTSLKEHIKYRHEKNEENFSCPLCSYTFAYRTQLERHMVTHKPGTDQHQMLTQGAGNRKFKCTECGKAFKYKHHLKEHLRIHSGEKPYECPNCKKRFSHSGSYSSHISSKKCIGLISVNGRMRNNIKTGSSPNSVSSSPTNSAITQLRNKLENGKPLSMSEQTGLLKIKTEPLDFNDYKVLMATHGFSGTSPFMNGGLGATSPLGVHPSAQSPMQHLGVGMEAPLLGFPTMNSNLSEVQKVLQIVDNTVSRQKMDCKAEEISKLKGYHMKDPCSQPEEQGVTSPNIPPVGLPVVSHNGATKSIIDYTLEKVNEAKACLQSLTTDSRRQISNIKKEKLRTLIDLVTDDKMIENHNISTPFSCQFCKESFPGPIPLHQHERYLCKMNEEIKAVLQPHENIVPNKAGVFVDNKALLLSSVLSEKGMTSPINPYKDHMSVLKAYYAMNMEPNSDELLKISIAVGLPQEFVKEWFEQRKVYQYSNSRSPSLERSSKPLAPNSNPPTKDSLLPRSPVKPMDSITSPSIAELHNSVTNCDPPLRLTKPSHFTNIKPVEKLDHSRSNTPSPLNLSSTSSKNSHSSSYTPNSFSSEELQAEPLDLSLPKQMKEPKSIIATKNKTKASSISLDHNSVSSSSENSDEPLNLTFIKKEFSNSNNLDNKSTNPVFSMNPFSAKPLYTALPPQSAFPPATFMPPVQTSIPGLRPYPGLDQMSFLPHMAYTYPTGAATFADMQQRRKYQRKQGFQGELLDGAQDYMSGLDDMTDSDSCLSRKKIKKTESGMYACDLCDKTFQKSSSLLRHKYEHTGKRPHQCQICKKAFKHKHHLIEHSRLHSGEKPYQCDKCGKRFSHSGSYSQHMNHRYSYCKREAEEREAAEREAREKGHLEPTELLMNRAYLQSITPQGYSDSEERESMPRDGESEKEHEKEGEDGYGKLGRQDGDEEFEEEEEESENKSMDTDPETIRDEEETGDHSMDDSSEDGKMETKSDHEEDNMEDGM.

The disordered stretch occupies residues 1 to 101 (MKQPIMADGP…GVEHPWHNNE (101 aa)). Residues 12–24 (CKRRKQANPRRKN) are compositionally biased toward basic residues. Polar residues predominate over residues 57 to 74 (DQETSPASVPNHESSPHV). Over residues 89–98 (REGGVEHPWH) the composition is skewed to basic and acidic residues. At serine 142 the chain carries Phosphoserine. C2H2-type zinc fingers lie at residues 211–234 (LTCPYCDRGYKRLTSLKEHIKYRH), 241–263 (FSCPLCSYTFAYRTQLERHMVTH), and 282–304 (FKCTECGKAFKYKHHLKEHLRIH). Residues 310–334 (YECPNCKKRFSHSGSYSSHISSKKC) form a C2H2-type 4; atypical zinc finger. Phosphoserine occurs at positions 356, 360, and 364. Lysine 377 carries the N6-acetyllysine modification. Lysine 391 participates in a covalent cross-link: Glycyl lysine isopeptide (Lys-Gly) (interchain with G-Cter in SUMO); alternate. Lysine 391 is covalently cross-linked (Glycyl lysine isopeptide (Lys-Gly) (interchain with G-Cter in SUMO2); alternate). The segment at 437–487 (QHLGVGMEAPLLGFPTMNSNLSEVQKVLQIVDNTVSRQKMDCKAEEISKLK) is SMAD-MH2 binding domain. Glycyl lysine isopeptide (Lys-Gly) (interchain with G-Cter in SUMO2) cross-links involve residues lysine 479 and lysine 555. The C2H2-type 5; atypical zinc-finger motif lies at 581–605 (FSCQFCKESFPGPIPLHQHERYLCK). Residues lysine 611 and lysine 632 each participate in a glycyl lysine isopeptide (Lys-Gly) (interchain with G-Cter in SUMO2) cross-link. A DNA-binding region (homeobox; atypical) is located at residues 644–703 (GMTSPINPYKDHMSVLKAYYAMNMEPNSDELLKISIAVGLPQEFVKEWFEQRKVYQYSNS). Residue serine 647 is modified to Phosphoserine. A compositionally biased stretch (low complexity) spans 702-715 (NSRSPSLERSSKPL). Disordered stretches follow at residues 702–740 (NSRSPSLERSSKPLAPNSNPPTKDSLLPRSPVKPMDSIT), 771–810 (PVEKLDHSRSNTPSPLNLSSTSSKNSHSSSYTPNSFSSEE), and 832–857 (ATKNKTKASSISLDHNSVSSSSENSD). Lysine 713 participates in a covalent cross-link: Glycyl lysine isopeptide (Lys-Gly) (interchain with G-Cter in SUMO2). Residues serine 731 and serine 780 each carry the phosphoserine modification. 2 stretches are compositionally biased toward low complexity: residues 780-808 (SNTPSPLNLSSTSSKNSHSSSYTPNSFSS) and 840-854 (SSISLDHNSVSSSSE). The residue at position 782 (threonine 782) is a Phosphothreonine. Residue serine 784 is modified to Phosphoserine. Lysine 866 participates in a covalent cross-link: Glycyl lysine isopeptide (Lys-Gly) (interchain with G-Cter in SUMO); alternate. Residue lysine 866 forms a Glycyl lysine isopeptide (Lys-Gly) (interchain with G-Cter in SUMO2); alternate linkage. C2H2-type zinc fingers lie at residues 999 to 1021 (YACDLCDKTFQKSSSLLRHKYEH) and 1027 to 1049 (HQCQICKKAFKHKHHLIEHSRLH). Residues 1055–1076 (YQCDKCGKRFSHSGSYSQHMNH) form a C2H2-type 8; atypical zinc finger. A disordered region spans residues 1117 to 1214 (TPQGYSDSEE…HEEDNMEDGM (98 aa)). Phosphoserine occurs at positions 1122 and 1124. A compositionally biased stretch (basic and acidic residues) spans 1127-1155 (RESMPRDGESEKEHEKEGEDGYGKLGRQD). Positions 1156–1167 (GDEEFEEEEEES) are enriched in acidic residues. 2 stretches are compositionally biased toward basic and acidic residues: residues 1168–1179 (ENKSMDTDPETI) and 1186–1205 (GDHSMDDSSEDGKMETKSDH). Serine 1203 carries the phosphoserine modification.

This sequence belongs to the delta-EF1/ZFH-1 C2H2-type zinc-finger family. In terms of assembly, binds activated SMAD1, activated SMAD2 and activated SMAD3; binding with SMAD4 is not detected. Interacts with CBX4 and CTBP1. In terms of processing, sumoylation on Lys-391 and Lys-866 is promoted by the E3 SUMO-protein ligase CBX4, and impairs interaction with CTBP1 and transcription repression activity.

The protein resides in the nucleus. It is found in the chromosome. Its function is as follows. Transcriptional inhibitor that binds to DNA sequence 5'-CACCT-3' in different promoters. Represses transcription of E-cadherin. Represses expression of MEOX2. The sequence is that of Zinc finger E-box-binding homeobox 2 from Homo sapiens (Human).